Here is a 499-residue protein sequence, read N- to C-terminus: MGLLSSKRQVSEKGKGWSPVKIRTQDKAPPPLPPLVVFNHLAPPSPNQDPDEEERFVVALFDYAAVNDRDLQVLKGEKLQVLRSTGDWWLARSLVTGREGYVPSNFVAPVETLEVEKWFFRTISRKDAERQLLAPMNKAGSFLIRESESNKGAFSLSVKDITTQGEVVKHYKIRSLDNGGYYISPRITFPTLQALVQHYSKKGDGLCQKLTLPCVNLAPKNLWAQDEWEIPRQSLKLVRKLGSGQFGEVWMGYYKNNMKVAIKTLKEGTMSPEAFLGEANVMKTLQHERLVRLYAVVTREPIYIVTEYMARGCLLDFLKTDEGSRLSLPRLIDMSAQVAEGMAYIERMNSIHRDLRAANILVSETLCCKIADFGLARIIDSEYTAQEGAKFPIKWTAPEAIHFGVFTIKADVWSFGVLLMEIVTYGRVPYPGMSNPEVIRSLEHGYRMPCPETCPPELYNDIITECWRGRPEERPTFEFLQSVLEDFYTATEGQYELQP.

The interval 1–34 (MGLLSSKRQVSEKGKGWSPVKIRTQDKAPPPLPP) is disordered. G2 carries the N-myristoyl glycine lipid modification. The region spanning 52-112 (EEERFVVALF…PSNFVAPVET (61 aa)) is the SH3 domain. Positions 118–214 (WFFRTISRKD…GLCQKLTLPC (97 aa)) constitute an SH2 domain. The 254-residue stretch at 235-488 (LKLVRKLGSG…FLQSVLEDFY (254 aa)) folds into the Protein kinase domain. ATP-binding positions include 241–249 (LGSGQFGEV) and K263. The active-site Proton acceptor is D354. Y383 is modified (phosphotyrosine; by autocatalysis).

Belongs to the protein kinase superfamily. Tyr protein kinase family. SRC subfamily. As to quaternary structure, interacts with CBL (via SH2 domain). Interacts with CD79A and CD79B (via SH2 domain). In terms of processing, phosphorylated on tyrosine residues after antibody-mediated surface engagement of the B-cell antigen receptor (BCR). Post-translationally, ubiquitination of activated BLK by the UBE3A ubiquitin protein ligase leads to its degradation by the ubiquitin-proteasome pathway. Expressed in immature Vgamma2 gamma-delta T-cells (at protein level). Expressed in the B-cell lineage.

It localises to the cell membrane. The catalysed reaction is L-tyrosyl-[protein] + ATP = O-phospho-L-tyrosyl-[protein] + ADP + H(+). Antibody-mediated surface engagement of the B-cell antigen receptor (BCR) which results in the phosphorylation of BLK on tyrosine residues, stimulates the enzymatic activity. Functionally, non-receptor tyrosine kinase involved in B-lymphocyte development, differentiation and signaling. B-cell receptor (BCR) signaling requires a tight regulation of several protein tyrosine kinases and phosphatases, and associated coreceptors. Binding of antigen to the B-cell antigen receptor (BCR) triggers signaling that ultimately leads to B-cell activation. Signaling through BLK plays an important role in transmitting signals through surface immunoglobulins and supports the pro-B to pre-B transition, as well as the signaling for growth arrest and apoptosis downstream of B-cell receptor. Specifically binds and phosphorylates CD79A at 'Tyr-188'and 'Tyr-199', as well as CD79B at 'Tyr-196' and 'Tyr-207'. Also phosphorylates the immunoglobulin G receptor FCGR2. With FYN and LYN, plays an essential role in pre-B-cell receptor (pre-BCR)-mediated NF-kappa-B activation. Also contributes to BTK activation by indirectly stimulating BTK intramolecular autophosphorylation. In pancreatic islets, acts as a modulator of beta-cells function through the up-regulation of PDX1 and NKX6-1 and consequent stimulation of insulin secretion in response to glucose. Phosphorylates CGAS, promoting retention of CGAS in the cytosol. This is Tyrosine-protein kinase Blk (Blk) from Mus musculus (Mouse).